We begin with the raw amino-acid sequence, 120 residues long: NADH-ubiquinone oxidoreductase chain 3 (120 aa).

The next 3 helical transmembrane spans lie at 10–30 (ILILFFISLGLSIILFFLGYF), 62–82 (FYLVAILFLIFDLEITFLFPF), and 89–109 (MTLFSYSIMLIFLIILTIGFI).

Belongs to the complex I subunit 3 family.

The protein localises to the mitochondrion membrane. It carries out the reaction a ubiquinone + NADH + 5 H(+)(in) = a ubiquinol + NAD(+) + 4 H(+)(out). Functionally, core subunit of the mitochondrial membrane respiratory chain NADH dehydrogenase (Complex I) that is believed to belong to the minimal assembly required for catalysis. Complex I functions in the transfer of electrons from NADH to the respiratory chain. The immediate electron acceptor for the enzyme is believed to be ubiquinone. This chain is NADH-ubiquinone oxidoreductase chain 3 (nad3), found in Dictyostelium citrinum (Slime mold).